Reading from the N-terminus, the 249-residue chain is Isoprenyl transferase (249 aa).

Residue Asp-25 is part of the active site. Mg(2+) is bound at residue Asp-25. Residues Gly-26–Arg-29, Trp-30, Arg-38, His-42, and Ser-70–Glu-72 each bind substrate. The active-site Proton acceptor is Asn-73. Substrate contacts are provided by residues Trp-74, Arg-76, Arg-197, and Arg-203–Ser-205. A Mg(2+)-binding site is contributed by Glu-216.

Belongs to the UPP synthase family. Homodimer. Requires Mg(2+) as cofactor.

Its function is as follows. Catalyzes the condensation of isopentenyl diphosphate (IPP) with allylic pyrophosphates generating different type of terpenoids. This is Isoprenyl transferase from Streptococcus pyogenes serotype M1.